The following is a 360-amino-acid chain: Photosystem II protein D1 1 (360 aa).

The next 3 helical transmembrane spans lie at 29-46 (YIGW…TATT), 118-133 (HFLI…QWEL), and 142-156 (WICV…AATA). Histidine 118 provides a ligand contact to chlorophyll a. Tyrosine 126 provides a ligand contact to pheophytin a. [CaMn4O5] cluster-binding residues include aspartate 170 and glutamate 189. The helical transmembrane segment at 197–218 (FHMLGVAGVFGGALFAAMHGSL) threads the bilayer. Chlorophyll a is bound at residue histidine 198. A quinone contacts are provided by residues histidine 215 and 264–265 (SF). Histidine 215 contacts Fe cation. Histidine 272 provides a ligand contact to Fe cation. Residues 274–288 (FLGAWPVVGIWFAAL) traverse the membrane as a helical segment. Residues histidine 332, glutamate 333, aspartate 342, and alanine 344 each coordinate [CaMn4O5] cluster. The propeptide occupies 345-360 (SGDAQMVALNAPAIEG).

It belongs to the reaction center PufL/M/PsbA/D family. PSII is composed of 1 copy each of membrane proteins PsbA, PsbB, PsbC, PsbD, PsbE, PsbF, PsbH, PsbI, PsbJ, PsbK, PsbL, PsbM, PsbT, PsbX, PsbY, PsbZ, Psb30/Ycf12, peripheral proteins PsbO, CyanoQ (PsbQ), PsbU, PsbV and a large number of cofactors. It forms dimeric complexes. The D1/D2 heterodimer binds P680, chlorophylls that are the primary electron donor of PSII, and subsequent electron acceptors. It shares a non-heme iron and each subunit binds pheophytin, quinone, additional chlorophylls, carotenoids and lipids. D1 provides most of the ligands for the Mn4-Ca-O5 cluster of the oxygen-evolving complex (OEC). There is also a Cl(-1) ion associated with D1 and D2, which is required for oxygen evolution. The PSII complex binds additional chlorophylls, carotenoids and specific lipids. is required as a cofactor. In terms of processing, C-terminally processed by CtpA; processing is essential to allow assembly of the oxygen-evolving complex and photosynthetic growth. Tyr-161 forms a radical intermediate that is referred to as redox-active TyrZ, YZ or Y-Z. Post-translationally, C-terminally processed by CtpA; processing is essential to allow assembly of the oxygen-evolving complex and thus photosynthetic growth.

The protein resides in the cellular thylakoid membrane. The catalysed reaction is 2 a plastoquinone + 4 hnu + 2 H2O = 2 a plastoquinol + O2. Functionally, photosystem II (PSII) is a light-driven water:plastoquinone oxidoreductase that uses light energy to abstract electrons from H(2)O, generating O(2) and a proton gradient subsequently used for ATP formation. It consists of a core antenna complex that captures photons, and an electron transfer chain that converts photonic excitation into a charge separation. The D1/D2 (PsbA/PsbD) reaction center heterodimer binds P680, the primary electron donor of PSII as well as several subsequent electron acceptors. This is Photosystem II protein D1 1 from Synechocystis sp. (strain ATCC 27184 / PCC 6803 / Kazusa).